Reading from the N-terminus, the 382-residue chain is Mannitol-1-phosphate 5-dehydrogenase (382 aa).

3–14 provides a ligand contact to NAD(+); the sequence is ALHFGAGNIGRG. Position 269 is an N6-acetyllysine (lysine 269).

The protein belongs to the mannitol dehydrogenase family.

The catalysed reaction is D-mannitol 1-phosphate + NAD(+) = beta-D-fructose 6-phosphate + NADH + H(+). This Escherichia coli (strain K12 / MC4100 / BW2952) protein is Mannitol-1-phosphate 5-dehydrogenase.